Here is a 349-residue protein sequence, read N- to C-terminus: tRNA uridine(34) hydroxylase (349 aa).

A Rhodanese domain is found at 146 to 240 (DDPDAVFIDM…YARRAREQGL (95 aa)). Cys200 functions as the Cysteine persulfide intermediate in the catalytic mechanism. Positions 316 to 328 (EEQRRRRAGRENG) are enriched in basic and acidic residues. The segment at 316 to 349 (EEQRRRRAGRENGNKIFNKSRGRLNTKLGIPDPE) is disordered.

Belongs to the TrhO family.

The catalysed reaction is uridine(34) in tRNA + AH2 + O2 = 5-hydroxyuridine(34) in tRNA + A + H2O. Its function is as follows. Catalyzes oxygen-dependent 5-hydroxyuridine (ho5U) modification at position 34 in tRNAs. This is tRNA uridine(34) hydroxylase from Enterobacter sp. (strain 638).